Here is a 409-residue protein sequence, read N- to C-terminus: Glycoprotein 55 (409 aa).

Positions 1–32 (MEGPASSKPLKDKTNPWGPLIILGILIRAGVS) are cleaved as a signal peptide. At 33–384 (VQLDSPHQVS…SSNRSPWFTT (352 aa)) the chain is on the virion surface side. N-linked (GlcNAc...) asparagine; by host glycans are attached at residues N43 and N58. Residues 232–280 (PIGSNPVTTDQLPLSRPVQTMPPRPLQPPPPGAASIVPETAPPPQQPGA) form a disordered region. A compositionally biased stretch (pro residues) spans 251-263 (TMPPRPLQPPPPG). N-linked (GlcNAc...) asparagine; by host glycosylation is found at N296 and N328. A helical membrane pass occupies residues 385 to 405 (LISAIMGSLIILLLLLILLIW). Topologically, residues 406-409 (TLYS) are intravirion.

As to quaternary structure, homooligomer. Forms heterooligomers with mouse EPOR, probably via their respective transmembrane domains. Forms covalent heterodimers with mouse MST1R isoform sf-Stk, probably via disulfide bonds.

It localises to the host endoplasmic reticulum membrane. Its subcellular location is the host cell membrane. It is found in the virion membrane. In terms of biological role, this envelope-like membrane glycoprotein is responsible for ligand-independent activation of the erythropoietin receptor EPOR leading to the abnormally rapid proliferation of erythroid precursor cells. In the first stage of Friend disease, constitutive activation of EPOR by gp55 causes uncontrolled, polyclonal proliferation of infected erythroblasts, leading to polycythemia (massive increase in the number of mature red cells). Host susceptibility to SSFV-induced erythroblastosis depends on the expression of the truncated isoform of MST1R receptor tyrosine kinase (MST1R isoform sf-Stk). Interaction with SSFV gp 55 results in constitutive tyrosine phosphorylation and activation of MST1R isoform sf-Stk. The polypeptide is Glycoprotein 55 (env) (Mus musculus (Mouse)).